We begin with the raw amino-acid sequence, 250 residues long: NAD(P)H-quinone oxidoreductase subunit K (250 aa).

Residues Cys-60, Cys-61, Cys-125, and Cys-156 each coordinate [4Fe-4S] cluster. The disordered stretch occupies residues 230–250 (ELNTSEIDASPASQPSSTYES). A compositionally biased stretch (polar residues) spans 231–250 (LNTSEIDASPASQPSSTYES).

The protein belongs to the complex I 20 kDa subunit family. In terms of assembly, NDH-1 can be composed of about 15 different subunits; different subcomplexes with different compositions have been identified which probably have different functions. [4Fe-4S] cluster serves as cofactor.

The protein localises to the cellular thylakoid membrane. It carries out the reaction a plastoquinone + NADH + (n+1) H(+)(in) = a plastoquinol + NAD(+) + n H(+)(out). The catalysed reaction is a plastoquinone + NADPH + (n+1) H(+)(in) = a plastoquinol + NADP(+) + n H(+)(out). In terms of biological role, NDH-1 shuttles electrons from an unknown electron donor, via FMN and iron-sulfur (Fe-S) centers, to quinones in the respiratory and/or the photosynthetic chain. The immediate electron acceptor for the enzyme in this species is believed to be plastoquinone. Couples the redox reaction to proton translocation, and thus conserves the redox energy in a proton gradient. Cyanobacterial NDH-1 also plays a role in inorganic carbon-concentration. In Prochlorococcus marinus (strain MIT 9303), this protein is NAD(P)H-quinone oxidoreductase subunit K.